An 860-amino-acid polypeptide reads, in one-letter code: Leucine--tRNA ligase (860 aa).

Residues 42-52 carry the 'HIGH' region motif; sequence PYPSGRLHMGH. The short motif at 619 to 623 is the 'KMSKS' region element; the sequence is KMSKS. Position 622 (lysine 622) interacts with ATP.

Belongs to the class-I aminoacyl-tRNA synthetase family.

The protein localises to the cytoplasm. The enzyme catalyses tRNA(Leu) + L-leucine + ATP = L-leucyl-tRNA(Leu) + AMP + diphosphate. The polypeptide is Leucine--tRNA ligase (Cronobacter sakazakii (strain ATCC BAA-894) (Enterobacter sakazakii)).